We begin with the raw amino-acid sequence, 391 residues long: Ribonuclease 3-like protein 2 (391 aa).

The Nuclear export signal signature appears at 7–26 (PEYNFPAITRCSLSNSLPHR). One can recognise an RNase III domain in the interval 60 to 203 (MEAVEKILNY…LAGAVYVDVN (144 aa)). The Mg(2+) site is built by glutamate 96, aspartate 189, and glutamate 192. DRBM domains are found at residues 218–294 (EPIV…KLSE) and 313–387 (HAKT…ALRK). A disulfide bridge connects residues cysteine 240 and cysteine 322. A Bipartite nuclear localization motif is present at residues 371-387 (KKAESSSAYHMIRALRK).

In terms of assembly, homodimer; disulfide-linked. The cofactor is Mg(2+). Mn(2+) is required as a cofactor. As to expression, expressed in seeds, leaves and flower buds.

It localises to the nucleus. Its subcellular location is the cytoplasm. Its function is as follows. Ribonuclease that cleaves double-stranded RNA (dsRNA). Required for 3'-external transcribed spacer (ETS) cleavage of the pre-rRNA precursors. May promote the production of 21 nucleotide small interfering RNA (siRNA) during post-transcriptional gene silencing (PTGS). This Arabidopsis thaliana (Mouse-ear cress) protein is Ribonuclease 3-like protein 2 (RTL2).